A 380-amino-acid chain; its full sequence is Deoxyguanosinetriphosphate triphosphohydrolase-like protein (380 aa).

The tract at residues 1–28 is disordered; sequence MYAPYATMPDRSRGRAVPEEESSFRSPF. The HD domain maps to 62–198; that stretch reads RLTHSIEVGQ…AALADDIAYN (137 aa).

The protein belongs to the dGTPase family. Type 2 subfamily.

This Ruegeria sp. (strain TM1040) (Silicibacter sp.) protein is Deoxyguanosinetriphosphate triphosphohydrolase-like protein.